The sequence spans 443 residues: Mitochondrial distribution and morphology protein 10 (443 aa).

Belongs to the MDM10 family. In terms of assembly, component of the ER-mitochondria encounter structure (ERMES) or MDM complex, composed of MMM1, MDM10, MDM12 and MDM34. Associates with the mitochondrial outer membrane sorting assembly machinery SAM(core) complex.

It localises to the mitochondrion outer membrane. In terms of biological role, component of the ERMES/MDM complex, which serves as a molecular tether to connect the endoplasmic reticulum and mitochondria. Components of this complex are involved in the control of mitochondrial shape and protein biogenesis and may function in phospholipid exchange. MDM10 is involved in the late assembly steps of the general translocase of the mitochondrial outer membrane (TOM complex). Functions in the TOM40-specific route of the assembly of outer membrane beta-barrel proteins, including the association of TOM40 with the receptor TOM22 and small TOM proteins. Can associate with the SAM(core) complex as well as the MDM12-MMM1 complex, both involved in late steps of the major beta-barrel assembly pathway, that is responsible for biogenesis of all outer membrane beta-barrel proteins. May act as a switch that shuttles between both complexes and channels precursor proteins into the TOM40-specific pathway. Plays a role in mitochondrial morphology and in the inheritance of mitochondria. In Pyricularia oryzae (strain 70-15 / ATCC MYA-4617 / FGSC 8958) (Rice blast fungus), this protein is Mitochondrial distribution and morphology protein 10.